Reading from the N-terminus, the 433-residue chain is MTVASTVSQEILNHCLAIEGQRRLQGVLKVSGAKNSALVLMTASLLTEELVELINVPNLTDIAGMGRILSALGVQVEHSGNGVALNAGNLTSHEPPYELVNSLRASFFCIGSLLGRLGHARVPLPGGCRIGARPVVEHIRGLKALGAHVSVEHGIVSACVKGSKKRLTGAPIVLDCPSVGATETLLMAAVLATGTTTIENAAHEPEVQDLANLLIQMGADISGAGGPVITIHGVERLAGVSNYPVIPDRIEAGTFLIAAAITRSPLRVEPVIPEHLSAVLQKLRDCGCQLEIDQTGISITPGDIQAVDITTQPFPGFPTDLQAPFMALMATAQGTSVISEKIYENRLQHVAELQRMGASIRVDGSTAIVEGVAQLSAAPVTGSDLRAAAAMVLAGLAANGTTKVSGLKHLYRGYDKVEAKLNAVGAQLERQQG.

34 to 35 contacts phosphoenolpyruvate; the sequence is KN. R104 is a UDP-N-acetyl-alpha-D-glucosamine binding site. C128 (proton donor) is an active-site residue. The residue at position 128 (C128) is a 2-(S-cysteinyl)pyruvic acid O-phosphothioketal. UDP-N-acetyl-alpha-D-glucosamine contacts are provided by D320 and I342.

The protein belongs to the EPSP synthase family. MurA subfamily.

The protein localises to the cytoplasm. It carries out the reaction phosphoenolpyruvate + UDP-N-acetyl-alpha-D-glucosamine = UDP-N-acetyl-3-O-(1-carboxyvinyl)-alpha-D-glucosamine + phosphate. Its pathway is cell wall biogenesis; peptidoglycan biosynthesis. Cell wall formation. Adds enolpyruvyl to UDP-N-acetylglucosamine. This is UDP-N-acetylglucosamine 1-carboxyvinyltransferase from Parasynechococcus marenigrum (strain WH8102).